A 211-amino-acid polypeptide reads, in one-letter code: ATP-dependent Clp protease proteolytic subunit 2 (211 aa).

Catalysis depends on Ser-106, which acts as the Nucleophile. His-131 is a catalytic residue.

It belongs to the peptidase S14 family. Fourteen ClpP subunits assemble into 2 heptameric rings which stack back to back to give a disk-like structure with a central cavity, resembling the structure of eukaryotic proteasomes.

It is found in the cytoplasm. It carries out the reaction Hydrolysis of proteins to small peptides in the presence of ATP and magnesium. alpha-casein is the usual test substrate. In the absence of ATP, only oligopeptides shorter than five residues are hydrolyzed (such as succinyl-Leu-Tyr-|-NHMec, and Leu-Tyr-Leu-|-Tyr-Trp, in which cleavage of the -Tyr-|-Leu- and -Tyr-|-Trp bonds also occurs).. Functionally, cleaves peptides in various proteins in a process that requires ATP hydrolysis. Has a chymotrypsin-like activity. Plays a major role in the degradation of misfolded proteins. This chain is ATP-dependent Clp protease proteolytic subunit 2, found in Bradyrhizobium diazoefficiens (strain JCM 10833 / BCRC 13528 / IAM 13628 / NBRC 14792 / USDA 110).